We begin with the raw amino-acid sequence, 634 residues long: Pentatricopeptide repeat-containing protein At5g14080 (634 aa).

PPR repeat units follow at residues 81-115 (DSIS…KILL), 116-150 (DSSV…GQEI), 151-185 (HPDV…GVSL), 186-220 (NTLG…NLNI), 222-256 (GSII…DCKP), 257-291 (DFMA…GVAP), 292-326 (RSSD…KFPM), 327-360 (DNDI…GKLP), 361-395 (AIRT…GYFS), 396-430 (ELQS…GLAP), 431-465 (DVSL…GCKM), 466-500 (NLTT…GIEP), and 501-535 (DETI…DHKT).

The protein belongs to the PPR family. P subfamily.

This chain is Pentatricopeptide repeat-containing protein At5g14080, found in Arabidopsis thaliana (Mouse-ear cress).